Here is a 646-residue protein sequence, read N- to C-terminus: Peptidylprolyl isomerase domain and WD repeat-containing protein 1 (646 aa).

A disordered region spans residues 1-30 (MAAESGSDFQQRRRRRRDPEEPEKTELSER). A2 is modified (N-acetylalanine). The span at 17–30 (RDPEEPEKTELSER) shows a compositional bias: basic and acidic residues. WD repeat units lie at residues 88–126 (MHRD…IEFV), 131–170 (SHLG…MINM), 221–260 (LHTS…YKFP), and 278–319 (KCKA…RVFD). The span at 455-478 (EPEDTKSADSDRDVFNEKPSKEEV) shows a compositional bias: basic and acidic residues. The disordered stretch occupies residues 455–490 (EPEDTKSADSDRDVFNEKPSKEEVMAATQAEGPKRV). One can recognise a PPIase cyclophilin-type domain in the interval 490–645 (VSDSAIIHTS…EDVSIINITV (156 aa)).

It belongs to the cyclophilin-type PPIase family. PPIL1 subfamily. As to quaternary structure, identified in the spliceosome C complex.

The protein resides in the nucleus. It catalyses the reaction [protein]-peptidylproline (omega=180) = [protein]-peptidylproline (omega=0). Its activity is regulated as follows. Inhibited by cyclosporin A (CsA). In terms of biological role, PPIase that catalyzes the cis-trans isomerization of proline imidic peptide bonds in oligopeptides and may therefore assist protein folding. May be involved in pre-mRNA splicing. The chain is Peptidylprolyl isomerase domain and WD repeat-containing protein 1 from Pongo abelii (Sumatran orangutan).